Here is a 258-residue protein sequence, read N- to C-terminus: Chymotrypsin-like elastase family member 1 (258 aa).

Positions 1–8 (MLVLYGHS) are cleaved as a signal peptide. The propeptide at 9-18 (TQDVPETNAR) is activation peptide. The Peptidase S1 domain maps to 19-256 (VVGGTEARRN…YITWINNVIA (238 aa)). Cys48 and Cys64 are joined by a disulfide. His63 acts as the Charge relay system in catalysis. Residues Glu77, Asn79, Gln82, and Glu87 each contribute to the Ca(2+) site. Asn79 carries an N-linked (GlcNAc...) asparagine glycan. Asp111 functions as the Charge relay system in the catalytic mechanism. 3 disulfide bridges follow: Cys145–Cys212, Cys176–Cys192, and Cys202–Cys232. The active-site Charge relay system is the Ser206. Asn233 carries N-linked (GlcNAc...) asparagine glycosylation.

It belongs to the peptidase S1 family. Elastase subfamily. Ca(2+) serves as cofactor.

The protein localises to the secreted. It carries out the reaction Hydrolysis of proteins, including elastin. Preferential cleavage: Ala-|-Xaa.. Functionally, serine proteases that hydrolyze many proteins in addition to elastin. The chain is Chymotrypsin-like elastase family member 1 (CELA1) from Canis lupus familiaris (Dog).